A 107-amino-acid chain; its full sequence is Guanylin (107 aa).

The first 20 residues, 1–20 (MNTFLLSALCLGAWAALVGA), serve as a signal peptide directing secretion. Positions 21-92 (VTVQDGDFSF…LNRLAVIAQD (72 aa)) are excised as a propeptide. 3 disulfides stabilise this stretch: C61-C74, C96-C104, and C99-C107.

Belongs to the guanylin family.

It localises to the secreted. Its function is as follows. Endogenous activator of intestinal guanylate cyclase. It stimulates this enzyme through the same receptor binding region as the heat-stable enterotoxins. The polypeptide is Guanylin (GUCA2A) (Cavia porcellus (Guinea pig)).